Here is a 318-residue protein sequence, read N- to C-terminus: Malate dehydrogenase (318 aa).

Residues G10–G15 and D34 contribute to the NAD(+) site. The substrate site is built by R83 and R89. Residues N96 and L119–N121 contribute to the NAD(+) site. The substrate site is built by N121 and R152. H176 functions as the Proton acceptor in the catalytic mechanism.

The protein belongs to the LDH/MDH superfamily. MDH type 3 family.

It carries out the reaction (S)-malate + NAD(+) = oxaloacetate + NADH + H(+). Its function is as follows. Catalyzes the reversible oxidation of malate to oxaloacetate. In Syntrophotalea carbinolica (strain DSM 2380 / NBRC 103641 / GraBd1) (Pelobacter carbinolicus), this protein is Malate dehydrogenase.